The primary structure comprises 177 residues: Large ribosomal subunit protein uL10 (177 aa).

This sequence belongs to the universal ribosomal protein uL10 family. Part of the ribosomal stalk of the 50S ribosomal subunit. The N-terminus interacts with L11 and the large rRNA to form the base of the stalk. The C-terminus forms an elongated spine to which L12 dimers bind in a sequential fashion forming a multimeric L10(L12)X complex.

Its function is as follows. Forms part of the ribosomal stalk, playing a central role in the interaction of the ribosome with GTP-bound translation factors. In Mycobacterium leprae (strain Br4923), this protein is Large ribosomal subunit protein uL10.